The primary structure comprises 205 residues: DNA-directed RNA polymerase RPB5 homolog (205 aa).

It belongs to the archaeal RpoH/eukaryotic RPB5 RNA polymerase subunit family. Part of the viral DNA-directed RNA polymerase that consists of 8 polII-like subunits (RPB1, RPB2, RPB3, RPB5, RPB6, RPB7, RPB9, RPB10), a capping enzyme and a termination factor.

Its subcellular location is the host cytoplasm. The protein localises to the virion. Functionally, component of the DNA-directed RNA polymerase (RNAP) that catalyzes the transcription in the cytoplasm of viral DNA into RNA using the four ribonucleoside triphosphates as substrates. This is DNA-directed RNA polymerase RPB5 homolog from Ornithodoros (relapsing fever ticks).